The primary structure comprises 1220 residues: MNHIYKLKSYGIGTDRRFYGVANKTLETPDFLDPVRESFDWFLHVGIPEAFDRIFPIVSANGKLEISFRRGSLRVEKPENEYLAIREAKIKGKTYSARVYVTLVKVHSEDGEMEEQEILLAEFPFMTQGGTFIINGFEKVVVSQLIRSPGVCFRENVRNQQADDLFNKVEIIPQLGSWMEIFHKVTGNQVDTVKFRIDKHKNIPLLSFLRAIGFTNETVRKYFGNSPELLESIRRHKLESLEENLELIYRIVRKDDRITEEGLKNLIPSIIFNERRYNLASTGRFMLNAKLNLVERISQTYLAEDLVSKKNKILFKKGTYITRQLALEIQEKFNNEEIPLSEIEGVDSTIYARQLEITRNENLWKRFYVAIVKVWPNKKSMLQESEPVNVIATDPNLNEKTLVLSDIIAIVSYYFNLLSNLGKSDDPDSLVNKRIVSVGELLQNQFLIALTKIEKNSKEKISTKSDLSQLTVKSIINNKPIYNQFKNFFNSSKLSQFMDQINPLGEMASKRKVTSLGPGGLNRDTAQFEVRDVHTTHYGRICPVETPEGQNIGLILNFSVFSRINQYGFIITPYYQVKNRIVDYSKVHWLAASEEFDKSFAQSGVEIDQNNRIIPDKLTVRKNQTYLVLDAEQVNYIDVSSMQMTSISASAIPFLENNDANRALMGSNMQRQAVPLIKSEAPLVATGIEEAVARFSATNLRAAISGKVTYVDAKKIIIDDGEKPEIHYLRYFEKSNQETLILQKPTVKVGDKVKKGQLICDGPSTDNGELALGKNVLVAFSTWYGYNYEDAIIISEKLVKDDVFTSIHIQEQTIKFRSTKAGNDILTAEIPNASAKSRLHLDANGIVIVGSEVDTGDILVGRTSPKGEDNPTAEEKLMAAIWGKKALAQKDTSLRVKNGEGGTVIDVQILSRDQGDNLEEGVGMLIKILIAQKRKIKVGDKMAGRHGNKGVVSVILPVEDMPFLEDGTPVDIVLNPQGVPSRMNIGQVLELHLGMVAKKLKTKFVTPVFDGIKIETIKKLFDEANIPESGKFKLFDGISGQAFENPVSVGYMYMLKLLHMVDDKMHARSIGPYSLTTQQPLGGKSQNGGQRFGEMETWALESFGATSVLSELLTYKSDNIQGRNLLYNNIISGGKIPSPGTPESFNVLAYELRGLLIKLEVHKNDQENQEGEEIKDPLELPEIPSNFIDEYNQDGRIELNKLEEFADFDEENIDFDKLTR.

It belongs to the RNA polymerase beta chain family. As to quaternary structure, the RNAP catalytic core consists of 2 alpha, 1 beta, 1 beta' and 1 omega subunit. When a sigma factor is associated with the core the holoenzyme is formed, which can initiate transcription.

It catalyses the reaction RNA(n) + a ribonucleoside 5'-triphosphate = RNA(n+1) + diphosphate. Its function is as follows. DNA-dependent RNA polymerase catalyzes the transcription of DNA into RNA using the four ribonucleoside triphosphates as substrates. The polypeptide is DNA-directed RNA polymerase subunit beta (Mesomycoplasma hyopneumoniae (strain 232) (Mycoplasma hyopneumoniae)).